A 526-amino-acid polypeptide reads, in one-letter code: MLDVRPDEVSAVLRQQLSNSLTEAQLEEVGTVLQVGDGVARIYGLTKAQAGELLEFEGGLKGMVLNLEEDNVGAVLLGEYSAIKEGSTVKRTKQIAFVNVGEGMVGRVVDTLGNPIDGKGPITGELYKMPMERKAPGVIYRQPVTEPLQTGIKAIDAMIPIGRGQRELIIGDRQTGKTTVALDAIINQKEFYDRGEPVFCIYVACGQKASTIAGIVGTLEKHGAMAYTVVVAATASDPAPMQYFAPFTGAAVGEYFRDTGRPALVVYDDLSKQAVAYREVSLLLRRPPGREAYPGDVFYLHSRLLERAAKINKSDEIAAAMNDLPESLKGIVKGGGSLTALPIIETQAGDVSAYIPTNVISITDGQIFLEINLFNSGVRPAINVGISVSRVGGNAQIKSMKKVAGTLKLDQAQFRELEAFAKFGSDLDASTKLTIERGRRNLEILKQPAFSPVSVEEQVATIYVSTNGFMDSVVVNKVRDFEKDFLTVLRTSHKDTLKEIKSGKIDDAITEVLKKVAKEVAVKYSK.

171–178 is a binding site for ATP; the sequence is GDRQTGKT.

This sequence belongs to the ATPase alpha/beta chains family. In terms of assembly, F-type ATPases have 2 components, CF(1) - the catalytic core - and CF(0) - the membrane proton channel. CF(1) has five subunits: alpha(3), beta(3), gamma(1), delta(1), epsilon(1). CF(0) has three main subunits: a(1), b(2) and c(9-12). The alpha and beta chains form an alternating ring which encloses part of the gamma chain. CF(1) is attached to CF(0) by a central stalk formed by the gamma and epsilon chains, while a peripheral stalk is formed by the delta and b chains.

The protein localises to the cell inner membrane. It carries out the reaction ATP + H2O + 4 H(+)(in) = ADP + phosphate + 5 H(+)(out). Functionally, produces ATP from ADP in the presence of a proton gradient across the membrane. The alpha chain is a regulatory subunit. The chain is ATP synthase subunit alpha from Cytophaga hutchinsonii (strain ATCC 33406 / DSM 1761 / CIP 103989 / NBRC 15051 / NCIMB 9469 / D465).